We begin with the raw amino-acid sequence, 313 residues long: Methionyl-tRNA formyltransferase (313 aa).

Residue 113 to 116 coordinates (6S)-5,6,7,8-tetrahydrofolate; sequence SLLP.

The protein belongs to the Fmt family.

It carries out the reaction L-methionyl-tRNA(fMet) + (6R)-10-formyltetrahydrofolate = N-formyl-L-methionyl-tRNA(fMet) + (6S)-5,6,7,8-tetrahydrofolate + H(+). Its function is as follows. Attaches a formyl group to the free amino group of methionyl-tRNA(fMet). The formyl group appears to play a dual role in the initiator identity of N-formylmethionyl-tRNA by promoting its recognition by IF2 and preventing the misappropriation of this tRNA by the elongation apparatus. The polypeptide is Methionyl-tRNA formyltransferase (Francisella tularensis subsp. mediasiatica (strain FSC147)).